A 453-amino-acid polypeptide reads, in one-letter code: tRNA modification GTPase MnmE (453 aa).

Residues R22, E79, and K119 each contribute to the (6S)-5-formyl-5,6,7,8-tetrahydrofolate site. Positions 215–376 (GMKVVIAGRP…LKAHLKSLMG (162 aa)) constitute a TrmE-type G domain. N225 provides a ligand contact to K(+). GTP is bound by residues 225-230 (NAGKSS), 244-250 (TEIAGTT), 269-272 (DTAG), and 334-337 (NKAD). S229 is a Mg(2+) binding site. T244, I246, and T249 together coordinate K(+). Position 250 (T250) interacts with Mg(2+). A (6S)-5-formyl-5,6,7,8-tetrahydrofolate-binding site is contributed by K453.

Belongs to the TRAFAC class TrmE-Era-EngA-EngB-Septin-like GTPase superfamily. TrmE GTPase family. In terms of assembly, homodimer. Heterotetramer of two MnmE and two MnmG subunits. The cofactor is K(+).

It localises to the cytoplasm. Its function is as follows. Exhibits a very high intrinsic GTPase hydrolysis rate. Involved in the addition of a carboxymethylaminomethyl (cmnm) group at the wobble position (U34) of certain tRNAs, forming tRNA-cmnm(5)s(2)U34. The protein is tRNA modification GTPase MnmE of Shewanella loihica (strain ATCC BAA-1088 / PV-4).